The chain runs to 227 residues: uncharacterized protein (227 aa).

A helical membrane pass occupies residues 7–26; the sequence is IITLTILIFISGLLTAFLLL.

It localises to the membrane. This is an uncharacterized protein from Haemophilus influenzae (strain ATCC 51907 / DSM 11121 / KW20 / Rd).